The chain runs to 55 residues: Sec-independent protein translocase protein TatA (55 aa).

A helical membrane pass occupies residues Met-1 to Phe-21.

Belongs to the TatA/E family. As to quaternary structure, forms a complex with TatC.

Its subcellular location is the cell inner membrane. Functionally, part of the twin-arginine translocation (Tat) system that transports large folded proteins containing a characteristic twin-arginine motif in their signal peptide across membranes. TatA could form the protein-conducting channel of the Tat system. The chain is Sec-independent protein translocase protein TatA from Koribacter versatilis (strain Ellin345).